The sequence spans 315 residues: Ornithine carbamoyltransferase (315 aa).

Residues 53-56, Q80, R104, and 131-134 contribute to the carbamoyl phosphate site; these read STRT and HPCQ. L-ornithine is bound by residues N163, D227, and 231–232; that span reads SM. Residues 267 to 268 and R295 contribute to the carbamoyl phosphate site; that span reads CL.

The protein belongs to the aspartate/ornithine carbamoyltransferase superfamily. OTCase family.

The protein resides in the cytoplasm. The catalysed reaction is carbamoyl phosphate + L-ornithine = L-citrulline + phosphate + H(+). The protein operates within amino-acid biosynthesis; L-arginine biosynthesis; L-arginine from L-ornithine and carbamoyl phosphate: step 1/3. In terms of biological role, reversibly catalyzes the transfer of the carbamoyl group from carbamoyl phosphate (CP) to the N(epsilon) atom of ornithine (ORN) to produce L-citrulline. The protein is Ornithine carbamoyltransferase of Rhodococcus jostii (strain RHA1).